Consider the following 277-residue polypeptide: Large ribosomal subunit protein uL2 (277 aa).

Residues 219–277 (TVRGSVMNPNDHPHGGGEGRSPIGHPSPRTPWGKPALGYKTRKNKKYSDRFIVKRRHDK) form a disordered region.

The protein belongs to the universal ribosomal protein uL2 family. Part of the 50S ribosomal subunit. Forms a bridge to the 30S subunit in the 70S ribosome.

Functionally, one of the primary rRNA binding proteins. Required for association of the 30S and 50S subunits to form the 70S ribosome, for tRNA binding and peptide bond formation. It has been suggested to have peptidyltransferase activity; this is somewhat controversial. Makes several contacts with the 16S rRNA in the 70S ribosome. This is Large ribosomal subunit protein uL2 from Clostridium botulinum (strain ATCC 19397 / Type A).